The following is a 210-amino-acid chain: Thymidylate kinase (210 aa).

Residue 9-16 coordinates ATP; sequence GPEGAGKT.

Belongs to the thymidylate kinase family.

It catalyses the reaction dTMP + ATP = dTDP + ADP. Its function is as follows. Phosphorylation of dTMP to form dTDP in both de novo and salvage pathways of dTTP synthesis. In Thermomicrobium roseum (strain ATCC 27502 / DSM 5159 / P-2), this protein is Thymidylate kinase.